The chain runs to 307 residues: D-alanine--D-alanine ligase (307 aa).

One can recognise an ATP-grasp domain in the interval 101–301; it reads KTVMRAAGVD…FGELVRWMVE (201 aa). 127 to 182 serves as a coordination point for ATP; the sequence is PLPPPYVVKPIAEGSSVGVIIVRDGRSHPPQILASEEWTFGEQVLAEPYIAGRELT. 3 residues coordinate Mg(2+): Asp251, Glu268, and Asn270.

Belongs to the D-alanine--D-alanine ligase family. The cofactor is Mg(2+). It depends on Mn(2+) as a cofactor.

It localises to the cytoplasm. It carries out the reaction 2 D-alanine + ATP = D-alanyl-D-alanine + ADP + phosphate + H(+). It participates in cell wall biogenesis; peptidoglycan biosynthesis. Its function is as follows. Cell wall formation. This Methylobacterium radiotolerans (strain ATCC 27329 / DSM 1819 / JCM 2831 / NBRC 15690 / NCIMB 10815 / 0-1) protein is D-alanine--D-alanine ligase.